Reading from the N-terminus, the 548-residue chain is MAKFMTPVIQDNPSGWGPCAVPEQFRDMPYQPFSKGDRLGKVADWTGATYQDKRYTNKYSSQFGGGSQYAYFHEEDESSFQLVDTARTQKTAYQRNRMRFAQRNLRRDKDRRNMLQFNLQILPKSAKQKERERIRLQKKFQKQFGVRQKWDQKSQKPRDSSVEVRSDWEVKEEMDFPQLMKMRYLEVSEPQDIECCGALEYYDKAFDRITTRSEKPLRSIKRIFHTVTTTDDPVIRKLAKTQGNVFATDAILATLMSCTRSVYSWDIVVQRVGSKLFFDKRDNSDFDLLTVSETANEPPQDEGNSFNSPRNLAMEATYINHNFSQQCLRMGKERYNFPNPNPFVEDDMDKNEIASVAYRYRWWKLGDDIDLIVRCEHDGVMTGANGGVSFINIKTLNEWDSRHCNGVDWRQKLDSQRGAVIATELKNNSYKLARWTCCALLAGSEYLKLGYVSRYHVKDSSRHVILGTQQFKPNEFASQINLSVENAWGILRCVIDICMKLEEGKYLILKDPNKQVIRVYSLPDGTFSSDEDEEEEEEEEEEEEEEET.

N6-acetyllysine is present on K53. S161 bears the Phosphoserine mark. An RNA gate region spans residues 285-299; the sequence is DFDLLTVSETANEPP. The disordered stretch occupies residues 523-548; the sequence is PDGTFSSDEDEEEEEEEEEEEEEEET. Phosphoserine occurs at positions 528 and 529. The span at 529-548 shows a compositional bias: acidic residues; sequence SDEDEEEEEEEEEEEEEEET.

The protein belongs to the eIF-3 subunit D family. Component of the eukaryotic translation initiation factor 3 (eIF-3) complex, which is composed of 13 subunits: EIF3A, EIF3B, EIF3C, EIF3D, EIF3E, EIF3F, EIF3G, EIF3H, EIF3I, EIF3J, EIF3K, EIF3L and EIF3M. The eIF-3 complex appears to include 3 stable modules: module A is composed of EIF3A, EIF3B, EIF3G and EIF3I; module B is composed of EIF3F, EIF3H, and EIF3M; and module C is composed of EIF3C, EIF3D, EIF3E, EIF3K and EIF3L. EIF3C of module C binds EIF3B of module A and EIF3H of module B, thereby linking the three modules. EIF3J is a labile subunit that binds to the eIF-3 complex via EIF3B. The eIF-3 complex interacts with RPS6KB1 under conditions of nutrient depletion. Mitogenic stimulation leads to binding and activation of a complex composed of MTOR and RPTOR, leading to phosphorylation and release of RPS6KB1 and binding of EIF4B to eIF-3.

It is found in the cytoplasm. MRNA cap-binding component of the eukaryotic translation initiation factor 3 (eIF-3) complex, a complex required for several steps in the initiation of protein synthesis of a specialized repertoire of mRNAs. The eIF-3 complex associates with the 40S ribosome and facilitates the recruitment of eIF-1, eIF-1A, eIF-2:GTP:methionyl-tRNAi and eIF-5 to form the 43S pre-initiation complex (43S PIC). The eIF-3 complex stimulates mRNA recruitment to the 43S PIC and scanning of the mRNA for AUG recognition. The eIF-3 complex is also required for disassembly and recycling of post-termination ribosomal complexes and subsequently prevents premature joining of the 40S and 60S ribosomal subunits prior to initiation. The eIF-3 complex specifically targets and initiates translation of a subset of mRNAs involved in cell proliferation, including cell cycling, differentiation and apoptosis, and uses different modes of RNA stem-loop binding to exert either translational activation or repression. In the eIF-3 complex, EIF3D specifically recognizes and binds the 7-methylguanosine cap of a subset of mRNAs. This Macaca fascicularis (Crab-eating macaque) protein is Eukaryotic translation initiation factor 3 subunit D.